We begin with the raw amino-acid sequence, 270 residues long: MASLRCFRELSRRATTVFSINQTRSISSFHGIEFSGTSISHGTVIPNRSLTRNLPWYSHWYRSQDRCFSSNTKDTDEDEESSEGEDDDEEEGEDFEDSADMEVEREYSPAEKVEEAEEIGYKVMGPLKPSERLFKPYEPVFAIVQIGSHQFKVSNGDSIFTEKLKFCDINDKLELTKVLLLGSASQTIIGRPILPDATVHAVVEEHALDEKVLIFKKKRRKNYRRTRGHRQELTKLRITDIQGIEKPEPKIVHKPSKEAVTEQTKAELVA.

The transit peptide at 1 to 68 directs the protein to the mitochondrion; the sequence is MASLRCFREL…HWYRSQDRCF (68 aa). Residues 68–113 form a disordered region; that stretch reads FSSNTKDTDEDEESSEGEDDDEEEGEDFEDSADMEVEREYSPAEKV. A compositionally biased stretch (acidic residues) spans 75–101; that stretch reads TDEDEESSEGEDDDEEEGEDFEDSADM. Over residues 102-113 the composition is skewed to basic and acidic residues; it reads EVEREYSPAEKV.

This sequence belongs to the bacterial ribosomal protein bL21 family. As to quaternary structure, component of the mitochondrial ribosome large subunit. As to expression, constitutively expressed in roots, stems, leaves, flowers, pistils and siliques.

Its subcellular location is the mitochondrion. This protein binds to 23S ribosomal RNA in the presence of protein L20. Required for karyogamy during female gametophyte development, when the two polar nuclei fuse to form the diploid central cell nucleus, and during double fertilization of the egg cell and the central cell. This is Large ribosomal subunit protein bL21m from Arabidopsis thaliana (Mouse-ear cress).